Here is a 345-residue protein sequence, read N- to C-terminus: Anthranilate phosphoribosyltransferase (345 aa).

5-phospho-alpha-D-ribose 1-diphosphate is bound by residues Gly-79, 82 to 83, Thr-87, 89 to 92, 106 to 114, and Ser-118; these read GD, NVST, and KHGNRAVSG. Gly-79 is a binding site for anthranilate. Ser-91 contacts Mg(2+). Residue Asn-109 coordinates anthranilate. Residue Arg-164 coordinates anthranilate. Mg(2+) contacts are provided by Asp-223 and Glu-224.

The protein belongs to the anthranilate phosphoribosyltransferase family. As to quaternary structure, homodimer. The cofactor is Mg(2+).

The enzyme catalyses N-(5-phospho-beta-D-ribosyl)anthranilate + diphosphate = 5-phospho-alpha-D-ribose 1-diphosphate + anthranilate. Its pathway is amino-acid biosynthesis; L-tryptophan biosynthesis; L-tryptophan from chorismate: step 2/5. Functionally, catalyzes the transfer of the phosphoribosyl group of 5-phosphorylribose-1-pyrophosphate (PRPP) to anthranilate to yield N-(5'-phosphoribosyl)-anthranilate (PRA). The protein is Anthranilate phosphoribosyltransferase of Sulfurisphaera tokodaii (strain DSM 16993 / JCM 10545 / NBRC 100140 / 7) (Sulfolobus tokodaii).